A 469-amino-acid polypeptide reads, in one-letter code: 2-oxoisovalerate dehydrogenase subunit beta, mitochondrial (469 aa).

Residues M1–Y40 constitute a mitochondrion transit peptide. Y167 serves as a coordination point for thiamine diphosphate. K(+) is bound by residues G194, L196, and T197.

In terms of assembly, heterotetramer of 2 alpha and 2 beta chains. It depends on thiamine diphosphate as a cofactor.

The protein resides in the mitochondrion matrix. The enzyme catalyses N(6)-[(R)-lipoyl]-L-lysyl-[protein] + 3-methyl-2-oxobutanoate + H(+) = N(6)-[(R)-S(8)-2-methylpropanoyldihydrolipoyl]-L-lysyl-[protein] + CO2. The branched-chain alpha-keto dehydrogenase complex catalyzes the overall conversion of alpha-keto acids to acyl-CoA and CO(2). It contains multiple copies of three enzymatic components: branched-chain alpha-keto acid decarboxylase (E1), lipoamide acyltransferase (E2) and lipoamide dehydrogenase (E3). The polypeptide is 2-oxoisovalerate dehydrogenase subunit beta, mitochondrial (Chaetomium thermophilum (strain DSM 1495 / CBS 144.50 / IMI 039719) (Thermochaetoides thermophila)).